Here is a 186-residue protein sequence, read N- to C-terminus: ATP synthase subunit delta (186 aa).

The protein belongs to the ATPase delta chain family. In terms of assembly, F-type ATPases have 2 components, F(1) - the catalytic core - and F(0) - the membrane proton channel. F(1) has five subunits: alpha(3), beta(3), gamma(1), delta(1), epsilon(1). F(0) has three main subunits: a(1), b(2) and c(10-14). The alpha and beta chains form an alternating ring which encloses part of the gamma chain. F(1) is attached to F(0) by a central stalk formed by the gamma and epsilon chains, while a peripheral stalk is formed by the delta and b chains.

The protein resides in the cell inner membrane. Functionally, f(1)F(0) ATP synthase produces ATP from ADP in the presence of a proton or sodium gradient. F-type ATPases consist of two structural domains, F(1) containing the extramembraneous catalytic core and F(0) containing the membrane proton channel, linked together by a central stalk and a peripheral stalk. During catalysis, ATP synthesis in the catalytic domain of F(1) is coupled via a rotary mechanism of the central stalk subunits to proton translocation. Its function is as follows. This protein is part of the stalk that links CF(0) to CF(1). It either transmits conformational changes from CF(0) to CF(1) or is implicated in proton conduction. The sequence is that of ATP synthase subunit delta from Bacteroides thetaiotaomicron (strain ATCC 29148 / DSM 2079 / JCM 5827 / CCUG 10774 / NCTC 10582 / VPI-5482 / E50).